The following is a 357-amino-acid chain: Protein Wnt-8c (357 aa).

An N-terminal signal peptide occupies residues 1-16 (MRGSTFLLLSIVGIYG). Cysteine 55 and cysteine 66 are joined by a disulfide. Residue asparagine 104 is glycosylated (N-linked (GlcNAc...) asparagine). Disulfide bonds link cysteine 105–cysteine 113, cysteine 115–cysteine 133, cysteine 181–cysteine 195, cysteine 183–cysteine 190, cysteine 260–cysteine 298, cysteine 276–cysteine 291, cysteine 313–cysteine 328, cysteine 315–cysteine 325, and cysteine 320–cysteine 321. Serine 187 is lipidated: O-palmitoleoyl serine. 2 N-linked (GlcNAc...) asparagine glycosylation sites follow: asparagine 263 and asparagine 282. A glycan (N-linked (GlcNAc...) asparagine) is linked at asparagine 346.

The protein belongs to the Wnt family. Post-translationally, palmitoleoylation is required for efficient binding to frizzled receptors. Depalmitoleoylation leads to Wnt signaling pathway inhibition. Proteolytic processing by tiki1 and tiki2 promotes oxidation and formation of large disulfide-bond oligomers, leading to inactivation of wnt8c. Cells that form rhombomere 4. Hensen node and the neural plate immediately anterior to it.

It localises to the secreted. The protein localises to the extracellular space. It is found in the extracellular matrix. In terms of biological role, ligand for members of the frizzled family of seven transmembrane receptors. Probable developmental protein. Is likely to signal over only few cell diameters. May be involved in the regulation of axis formation and in the rhombomere specification. The chain is Protein Wnt-8c (WNT8C) from Gallus gallus (Chicken).